The following is a 261-amino-acid chain: Zinc finger protein 664 (261 aa).

C2H2-type zinc fingers lie at residues 3-25 (YKCP…QKIH), 31-53 (HKCD…WRDH), 59-81 (YKCD…KKIH), 87-109 (YKCY…MRVH), 115-137 (YVCS…QRVH), 143-165 (FKCE…QRVH), 171-193 (YKCY…QRVH), 199-221 (YRCC…QRVH), and 227-249 (FKCD…QRVH). Residue lysine 257 forms a Glycyl lysine isopeptide (Lys-Gly) (interchain with G-Cter in SUMO2) linkage.

Belongs to the krueppel C2H2-type zinc-finger protein family.

It localises to the nucleus. May be involved in transcriptional regulation. This Homo sapiens (Human) protein is Zinc finger protein 664.